A 341-amino-acid chain; its full sequence is MSSGTEHRRNQVLRAIVSDFIASHEPVGSKMLVDRHQLGVSSATIRNDMAVLEAEGYITQQHASSGRIPTVKGYRRFVDGINEVKPLSTPERRAILDFLEHGVDLEDVLRRSVQLLSQLTRQVAVVQMPDLRRGRVKHCELVKLGSHRILLVLITDTGRVDQRNVDLGQPISDDDLPRLRDLVNSAMVGRTLDDACTNIAALANEAKGNSMPEELRDVALVVTTVLVETLLERPNDRLILAGTPNLMRTSELSPVVEALEEQVVVLKLLNSVRDLQVQVSIGEENEDEELRGASVVSTGYGNANAVLGGMGVVGPTHLDYSGTISSVTAVAHYVSRILSEE.

This sequence belongs to the HrcA family.

Its function is as follows. Negative regulator of class I heat shock genes (grpE-dnaK-dnaJ and groELS operons). Prevents heat-shock induction of these operons. This Corynebacterium jeikeium (strain K411) protein is Heat-inducible transcription repressor HrcA.